Consider the following 234-residue polypeptide: uncharacterized protein (234 aa).

Residues 62 to 99 (NEESISDLNSDNPGNSEPSDVESFVLSDEDENSEKDFS) are disordered. A compositionally biased stretch (polar residues) spans 67 to 79 (SDLNSDNPGNSEP).

This is an uncharacterized protein from Acanthamoeba polyphaga (Amoeba).